A 434-amino-acid polypeptide reads, in one-letter code: MQTSYKNKKVTVIGLGKTGLSCVDFLLAKQADVRVIDTRTQPAGAEQLAKNVPLHTGSLNQQWLLESDLIIISPGLAVKTPEIQTALAAGIEVIGDIELFCREAKKPIIAITGSNGKSTVTSLVAHMVNAAGLKVGMGGNIGIPALSLLEQAHDMYVLELSSFQLETTYSLKATSATVLNISEDHMNRYVDLEDYRQAKLKIYHHAQTAVINAEDALTAMDGLKNGVSFGEDNADYWLKTEKGRSYLMAKDERVLACDEMKLVGRHNYMNALAAIALAQAAGIPLESIRRALREFNGLDHRFQLAHFAHGVRWVNDSKATNVGSTVAALTGLQLNGTLHLLLGGDGKGADFSELASLINQPNIICYCFGQDGEQLAALSPRSQRFSTMEEAINALRPTLSAGDMVLLSPACASLDQFSSFEQRGDEFTRLAKLS.

113 to 119 is a binding site for ATP; sequence GSNGKST.

The protein belongs to the MurCDEF family.

The protein resides in the cytoplasm. It catalyses the reaction UDP-N-acetyl-alpha-D-muramoyl-L-alanine + D-glutamate + ATP = UDP-N-acetyl-alpha-D-muramoyl-L-alanyl-D-glutamate + ADP + phosphate + H(+). Its pathway is cell wall biogenesis; peptidoglycan biosynthesis. Functionally, cell wall formation. Catalyzes the addition of glutamate to the nucleotide precursor UDP-N-acetylmuramoyl-L-alanine (UMA). The polypeptide is UDP-N-acetylmuramoylalanine--D-glutamate ligase (Pasteurella multocida (strain Pm70)).